A 149-amino-acid chain; its full sequence is Transcriptional repressor NrdR (149 aa).

A zinc finger spans residues 3-34 (CPFCTAKDTKVIDSRLVGGGHQVRRRRECNDC). Residues 49–139 (PRVIKQDGSR…VYRSFEDIRE (91 aa)) enclose the ATP-cone domain.

It belongs to the NrdR family. Requires Zn(2+) as cofactor.

Negatively regulates transcription of bacterial ribonucleotide reductase nrd genes and operons by binding to NrdR-boxes. This Pseudoalteromonas translucida (strain TAC 125) protein is Transcriptional repressor NrdR.